The chain runs to 266 residues: Glutamate racemase (266 aa).

Substrate contacts are provided by residues 9-10 and 41-42; these read DS and YG. Cys73 serves as the catalytic Proton donor/acceptor. 74–75 is a substrate binding site; sequence NS. The active-site Proton donor/acceptor is the Cys183. 184-185 is a binding site for substrate; the sequence is TH.

It belongs to the aspartate/glutamate racemases family.

The enzyme catalyses L-glutamate = D-glutamate. The protein operates within cell wall biogenesis; peptidoglycan biosynthesis. In terms of biological role, provides the (R)-glutamate required for cell wall biosynthesis. This is Glutamate racemase from Shewanella halifaxensis (strain HAW-EB4).